Reading from the N-terminus, the 382-residue chain is S-adenosylmethionine synthase (382 aa).

His-15 lines the ATP pocket. Residue Asp-17 coordinates Mg(2+). Residue Glu-43 participates in K(+) binding. The L-methionine site is built by Glu-56 and Gln-99. A flexible loop region spans residues 99–109 (QSGDIAQGVDR). ATP is bound by residues 164–166 (DAK), 230–231 (KF), Asp-239, 245–246 (RK), Ala-262, and Lys-266. Position 239 (Asp-239) interacts with L-methionine. Lys-270 is a binding site for L-methionine.

The protein belongs to the AdoMet synthase family. Homotetramer; dimer of dimers. Mg(2+) serves as cofactor. The cofactor is K(+).

The protein localises to the cytoplasm. The enzyme catalyses L-methionine + ATP + H2O = S-adenosyl-L-methionine + phosphate + diphosphate. The protein operates within amino-acid biosynthesis; S-adenosyl-L-methionine biosynthesis; S-adenosyl-L-methionine from L-methionine: step 1/1. Its function is as follows. Catalyzes the formation of S-adenosylmethionine (AdoMet) from methionine and ATP. The overall synthetic reaction is composed of two sequential steps, AdoMet formation and the subsequent tripolyphosphate hydrolysis which occurs prior to release of AdoMet from the enzyme. The polypeptide is S-adenosylmethionine synthase (Dichelobacter nodosus (strain VCS1703A)).